We begin with the raw amino-acid sequence, 480 residues long: UDP-glycosyltransferase 71C5 (480 aa).

Residues Ser290, 349 to 351 (APQ), 366 to 374 (HCGWNSVQE), and 388 to 391 (YAEQ) each bind UDP-alpha-D-glucose.

The protein belongs to the UDP-glycosyltransferase family.

Possesses low quercetin 3-O-glucosyltransferase activity in vitro. This is UDP-glycosyltransferase 71C5 (UGT71C5) from Arabidopsis thaliana (Mouse-ear cress).